A 128-amino-acid chain; its full sequence is Iron-sulfur cluster insertion protein ErpA (128 aa).

Positions 56, 120, and 122 each coordinate iron-sulfur cluster.

This sequence belongs to the HesB/IscA family. Homodimer. It depends on iron-sulfur cluster as a cofactor.

Required for insertion of 4Fe-4S clusters for at least IspG. In Xylella fastidiosa (strain M12), this protein is Iron-sulfur cluster insertion protein ErpA.